The primary structure comprises 219 residues: Probable nicotinate-nucleotide adenylyltransferase (219 aa).

This sequence belongs to the NadD family.

The catalysed reaction is nicotinate beta-D-ribonucleotide + ATP + H(+) = deamido-NAD(+) + diphosphate. The protein operates within cofactor biosynthesis; NAD(+) biosynthesis; deamido-NAD(+) from nicotinate D-ribonucleotide: step 1/1. In terms of biological role, catalyzes the reversible adenylation of nicotinate mononucleotide (NaMN) to nicotinic acid adenine dinucleotide (NaAD). The polypeptide is Probable nicotinate-nucleotide adenylyltransferase (Herminiimonas arsenicoxydans).